The chain runs to 945 residues: Isoleucine--tRNA ligase (945 aa).

The short motif at 66 to 76 (PYANGDIHLGH) is the 'HIGH' region element. Residue Glu581 participates in L-isoleucyl-5'-AMP binding. Residues 622 to 626 (KMSKS) carry the 'KMSKS' region motif. ATP is bound at residue Lys625. Residues Cys908, Cys911, Cys928, and Cys931 each contribute to the Zn(2+) site.

It belongs to the class-I aminoacyl-tRNA synthetase family. IleS type 1 subfamily. As to quaternary structure, monomer. The cofactor is Zn(2+).

Its subcellular location is the cytoplasm. It carries out the reaction tRNA(Ile) + L-isoleucine + ATP = L-isoleucyl-tRNA(Ile) + AMP + diphosphate. Its function is as follows. Catalyzes the attachment of isoleucine to tRNA(Ile). As IleRS can inadvertently accommodate and process structurally similar amino acids such as valine, to avoid such errors it has two additional distinct tRNA(Ile)-dependent editing activities. One activity is designated as 'pretransfer' editing and involves the hydrolysis of activated Val-AMP. The other activity is designated 'posttransfer' editing and involves deacylation of mischarged Val-tRNA(Ile). The chain is Isoleucine--tRNA ligase from Paraburkholderia xenovorans (strain LB400).